We begin with the raw amino-acid sequence, 573 residues long: Probable CoA ligase CCL13 (573 aa).

Residues 216 to 224, 352 to 357, Asp-449, 461 to 464, and Lys-556 each bind ATP; these read TSGTTARPK, HIYGLT, and LKDR. Positions 284–352 are SBD1; that stretch reads SPKAIFDNIH…MEEMGFQVNH (69 aa). The segment at 353–429 is SBD2; sequence IYGLTETHGP…FRGNTVMSGY (77 aa).

It belongs to the ATP-dependent AMP-binding enzyme family.

Its subcellular location is the cytoplasm. The protein resides in the cytosol. The polypeptide is Probable CoA ligase CCL13 (Humulus lupulus (European hop)).